Consider the following 166-residue polypeptide: Bud site selection protein 20 (166 aa).

The Nuclear localization signal motif lies at 7-16 (KRYKTKRRTR). Positions 17–31 (DLDLIYNDLSTKESV) are nuclear export signal-like (NES-like). The segment at 49–73 (HYCIHCAKYMETAIALKTHLKGKVH) adopts a C2H2-type zinc-finger fold.

Belongs to the ZNF593/BUD20 C2H2-type zinc-finger protein family. Associates with pre-60S ribosomal particles; released from the pre-60S particle very early in the cytoplasm.

It is found in the nucleus. The protein localises to the cytoplasm. Its function is as follows. Involved in pre-60S ribosomal particles maturation by promoting the nuclear export of the 60S ribosome. Involved in positioning the proximal bud pole signal. The chain is Bud site selection protein 20 from Saccharomyces cerevisiae (strain ATCC 204508 / S288c) (Baker's yeast).